The sequence spans 359 residues: 4-hydroxy-3-methylbut-2-en-1-yl diphosphate synthase (flavodoxin) (359 aa).

[4Fe-4S] cluster contacts are provided by Cys264, Cys267, Cys299, and Glu306.

The protein belongs to the IspG family. The cofactor is [4Fe-4S] cluster.

The catalysed reaction is (2E)-4-hydroxy-3-methylbut-2-enyl diphosphate + oxidized [flavodoxin] + H2O + 2 H(+) = 2-C-methyl-D-erythritol 2,4-cyclic diphosphate + reduced [flavodoxin]. It functions in the pathway isoprenoid biosynthesis; isopentenyl diphosphate biosynthesis via DXP pathway; isopentenyl diphosphate from 1-deoxy-D-xylulose 5-phosphate: step 5/6. Converts 2C-methyl-D-erythritol 2,4-cyclodiphosphate (ME-2,4cPP) into 1-hydroxy-2-methyl-2-(E)-butenyl 4-diphosphate. This is 4-hydroxy-3-methylbut-2-en-1-yl diphosphate synthase (flavodoxin) from Helicobacter pylori (strain ATCC 700392 / 26695) (Campylobacter pylori).